We begin with the raw amino-acid sequence, 117 residues long: MAGRSGDSDEDLLRAIRLIKILYQSNPPPNTEGTTRQARRNRRRRWRARQRQINSIGERILSTYLGRPEEPVPLQLPPLERLTLNCNEDCGTSGTQGVGSPQISVESPAILGSGTEE.

Phosphoserine; by host CK2 occurs at positions 5 and 8. Positions leucine 18–asparagine 26 are homomultimerization. The segment at glutamine 24–arginine 49 is disordered. Positions threonine 35–arginine 51 match the Nuclear localization signal and RNA-binding (RRE) motif. Residues glutamine 37–arginine 49 show a composition bias toward basic residues. A Nuclear export signal and binding to XPO1 motif is present at residues leucine 74 to asparagine 85. Residues serine 93 and serine 100 each carry the phosphoserine; by host modification. Positions serine 93 to valine 105 are enriched in polar residues. Positions serine 93–glutamate 117 are disordered.

Belongs to the HIV-1 REV protein family. As to quaternary structure, homomultimer; when bound to the RRE. Multimeric assembly is essential for activity and may involve XPO1. Binds to human KPNB1, XPO1, TNPO1, RANBP5 and IPO7. Interacts with the viral Integrase. Interacts with human KHDRBS1. Interacts with human NAP1; this interaction decreases Rev multimerization and stimulates its activity. Interacts with human DEAD-box helicases DDX3 and DDX24; these interactions may serve for viral RNA export to the cytoplasm and packaging, respectively. Interacts with human PSIP1; this interaction may inhibit HIV-1 DNA integration by promoting dissociation of the Integrase-LEDGF/p75 complex. Asymmetrically arginine dimethylated at one site by host PRMT6. Methylation impairs the RNA-binding activity and export of viral RNA from the nucleus to the cytoplasm. Post-translationally, phosphorylated by protein kinase CK2. Presence of, and maybe binding to the N-terminus of the regulatory beta subunit of CK2 is necessary for CK2-mediated Rev's phosphorylation.

The protein resides in the host nucleus. Its subcellular location is the host nucleolus. It is found in the host cytoplasm. Escorts unspliced or incompletely spliced viral pre-mRNAs (late transcripts) out of the nucleus of infected cells. These pre-mRNAs carry a recognition sequence called Rev responsive element (RRE) located in the env gene, that is not present in fully spliced viral mRNAs (early transcripts). This function is essential since most viral proteins are translated from unspliced or partially spliced pre-mRNAs which cannot exit the nucleus by the pathway used by fully processed cellular mRNAs. Rev itself is translated from a fully spliced mRNA that readily exits the nucleus. Rev's nuclear localization signal (NLS) binds directly to KPNB1/Importin beta-1 without previous binding to KPNA1/Importin alpha-1. KPNB1 binds to the GDP bound form of RAN (Ran-GDP) and targets Rev to the nucleus. In the nucleus, the conversion from Ran-GDP to Ran-GTP dissociates Rev from KPNB1 and allows Rev's binding to the RRE in viral pre-mRNAs. Rev multimerization on the RRE via cooperative assembly exposes its nuclear export signal (NES) to the surface. Rev can then form a complex with XPO1/CRM1 and Ran-GTP, leading to nuclear export of the complex. Conversion from Ran-GTP to Ran-GDP mediates dissociation of the Rev/RRE/XPO1/RAN complex, so that Rev can return to the nucleus for a subsequent round of export. Beside KPNB1, also seems to interact with TNPO1/Transportin-1, RANBP5/IPO5 and IPO7/RANBP7 for nuclear import. The nucleoporin-like HRB/RIP is an essential cofactor that probably indirectly interacts with Rev to release HIV RNAs from the perinuclear region to the cytoplasm. The chain is Protein Rev from Human immunodeficiency virus type 1 group M subtype A (isolate MAL) (HIV-1).